We begin with the raw amino-acid sequence, 159 residues long: UPF0178 protein AZC_4000 (159 aa).

This sequence belongs to the UPF0178 family.

The polypeptide is UPF0178 protein AZC_4000 (Azorhizobium caulinodans (strain ATCC 43989 / DSM 5975 / JCM 20966 / LMG 6465 / NBRC 14845 / NCIMB 13405 / ORS 571)).